We begin with the raw amino-acid sequence, 505 residues long: ATP synthase subunit alpha (505 aa).

An ATP-binding site is contributed by 170–177; that stretch reads GDRQTGKT.

The protein belongs to the ATPase alpha/beta chains family. In terms of assembly, F-type ATPases have 2 components, CF(1) - the catalytic core - and CF(0) - the membrane proton channel. CF(1) has five subunits: alpha(3), beta(3), gamma(1), delta(1), epsilon(1). CF(0) has four main subunits: a(1), b(1), b'(1) and c(9-12).

It is found in the cellular thylakoid membrane. The enzyme catalyses ATP + H2O + 4 H(+)(in) = ADP + phosphate + 5 H(+)(out). Produces ATP from ADP in the presence of a proton gradient across the membrane. The alpha chain is a regulatory subunit. The chain is ATP synthase subunit alpha from Prochlorococcus marinus subsp. pastoris (strain CCMP1986 / NIES-2087 / MED4).